A 220-amino-acid chain; its full sequence is uncharacterized protein (220 aa).

A signal peptide spans 1–25 (MSCGTYKRGSLTFLLVVALAVPVFC).

Nacreous layer of shell (at protein level). Expressed primarily in the mantle with highest level in the mantle pallium and lower level in the mantle edge.

The protein resides in the secreted. This is an uncharacterized protein from Margaritifera margaritifera (Freshwater pearl mussel).